Reading from the N-terminus, the 407-residue chain is Imidazolonepropionase (407 aa).

Residues histidine 75 and histidine 77 each contribute to the Fe(3+) site. Residues histidine 75 and histidine 77 each contribute to the Zn(2+) site. The 4-imidazolone-5-propanoate site is built by arginine 84, tyrosine 147, and histidine 180. N-formimidoyl-L-glutamate is bound at residue tyrosine 147. Histidine 245 is a Fe(3+) binding site. Histidine 245 provides a ligand contact to Zn(2+). Glutamine 248 is a 4-imidazolone-5-propanoate binding site. Aspartate 320 is a binding site for Fe(3+). Aspartate 320 contacts Zn(2+). N-formimidoyl-L-glutamate is bound by residues asparagine 322 and glycine 324. Serine 325 is a binding site for 4-imidazolone-5-propanoate.

It belongs to the metallo-dependent hydrolases superfamily. HutI family. Zn(2+) is required as a cofactor. Fe(3+) serves as cofactor.

Its subcellular location is the cytoplasm. The catalysed reaction is 4-imidazolone-5-propanoate + H2O = N-formimidoyl-L-glutamate. It participates in amino-acid degradation; L-histidine degradation into L-glutamate; N-formimidoyl-L-glutamate from L-histidine: step 3/3. Its function is as follows. Catalyzes the hydrolytic cleavage of the carbon-nitrogen bond in imidazolone-5-propanoate to yield N-formimidoyl-L-glutamate. It is the third step in the universal histidine degradation pathway. The sequence is that of Imidazolonepropionase from Pseudoalteromonas atlantica (strain T6c / ATCC BAA-1087).